Consider the following 242-residue polypeptide: Cysteine-rich venom protein helothermine (242 aa).

The N-terminal stretch at 1–19 (MILLSLYLCLAAMLHQSEG) is a signal peptide. An SCP domain is found at 41 to 169 (DKHNNLRRIV…TYKYYQVCQY (129 aa)). Cystine bridges form between Cys-77/Cys-155, Cys-94/Cys-170, Cys-150/Cys-167, Cys-189/Cys-196, Cys-192/Cys-201, Cys-205/Cys-237, Cys-214/Cys-231, and Cys-223/Cys-235. A ShKT domain is found at 205–237 (CKQNDVYNNCPDLKKQVGCGHPIMKDCMATCKC).

The protein belongs to the CRISP family. Expressed by the venom gland.

The protein resides in the secreted. Alters a variety of ion channel activities, including voltage-gated potassium channels (Kv), voltage-gated calcium channels (L-, N-, and P-type) (Cav) and ryanodine receptors (RyR). Is toxic to mice (causes lethargy, partial paralysis of rear limbs and lowering of body temperature). The protein is Cysteine-rich venom protein helothermine of Heloderma horridum horridum (Mexican beaded lizard).